Consider the following 857-residue polypeptide: uncharacterized protein (857 aa).

This is an uncharacterized protein from Bacillus subtilis (strain 168).